A 44-amino-acid polypeptide reads, in one-letter code: Photosystem I reaction center subunit IX (44 aa).

A helical transmembrane segment spans residues 7–27; it reads YLSTAPVLATLWFGSLAGLLI.

Belongs to the PsaJ family.

It localises to the plastid. The protein localises to the chloroplast thylakoid membrane. Functionally, may help in the organization of the PsaE and PsaF subunits. This chain is Photosystem I reaction center subunit IX, found in Cycas taitungensis (Prince sago).